The chain runs to 21 residues: Testis ecdysiotropin peptide 1 (21 aa).

A disordered region spans residues 1–21 (ISDFDEYEPLNDADNNEVLDF).

Start or boost ecdysteroid synthesis in testis of larvae and pupae. The protein is Testis ecdysiotropin peptide 1 of Lymantria dispar (Gypsy moth).